The sequence spans 126 residues: C-type natriuretic peptide 1 (126 aa).

The first 22 residues, 1 to 22 (MLCPALLCAALLLLTPVEITDA), serve as a signal peptide directing secretion. A propeptide spanning residues 23-104 (RALQQPSDAA…KRAEPDRSRR (82 aa)) is cleaved from the precursor. A disulfide bond links Cys110 and Cys126.

It belongs to the natriuretic peptide family.

It localises to the secreted. Its function is as follows. Exhibits natriuretic and vasodepressant activity. Has cGMP-stimulating activity. May help to regulate body fluid homeostasis in a variety of aquatic environments. The protein is C-type natriuretic peptide 1 of Takifugu rubripes (Japanese pufferfish).